A 230-amino-acid chain; its full sequence is Agamous-like MADS-box protein AGL11 (230 aa).

The 55-residue stretch at 3–57 (RGKIEIKRIENSTNRQVTFCKRRNGLLKKAYELSVLCDAEVALIVFSTRGRLYEY) folds into the MADS-box domain. Residues 87–177 (AAYYQQESAK…RTKVAEVERY (91 aa)) form the K-box domain. Residues 211–230 (SGSGNGGSYSDPDKKILHLG) form a disordered region. The span at 221–230 (DPDKKILHLG) shows a compositional bias: basic and acidic residues.

In terms of assembly, interacts with AGL15 and AGL16.

The protein localises to the nucleus. Functionally, probable transcription factor. Is required, together with TT16/AGL32 for the maternal control of endothelium formation, which is essential for female gametophyte development and fertilization, and seed formation. The chain is Agamous-like MADS-box protein AGL11 (AGL11) from Arabidopsis thaliana (Mouse-ear cress).